The primary structure comprises 143 residues: ATP synthase subunit 9, mitochondrial (143 aa).

The transit peptide at 1 to 62 (MAASRVFAQR…ARQAFAARRQ (62 aa)) directs the protein to the mitochondrion. The next 2 helical transmembrane spans lie at 85 to 105 (IGLG…LLAV) and 119 to 139 (AILG…VAMM).

This sequence belongs to the ATPase C chain family. As to quaternary structure, F-type ATPases have 2 components, CF(1) - the catalytic core - and CF(0) - the membrane proton channel. CF(1) has five subunits: alpha(3), beta(3), gamma(1), delta(1), epsilon(1). CF(0) has three main subunits: a, b and c.

The protein resides in the mitochondrion membrane. Mitochondrial membrane ATP synthase (F(1)F(0) ATP synthase or Complex V) produces ATP from ADP in the presence of a proton gradient across the membrane which is generated by electron transport complexes of the respiratory chain. F-type ATPases consist of two structural domains, F(1) - containing the extramembraneous catalytic core and F(0) - containing the membrane proton channel, linked together by a central stalk and a peripheral stalk. During catalysis, ATP synthesis in the catalytic domain of F(1) is coupled via a rotary mechanism of the central stalk subunits to proton translocation. Part of the complex F(0) domain. A homomeric c-ring of probably 10 subunits is part of the complex rotary element. The protein is ATP synthase subunit 9, mitochondrial (atp9) of Emericella nidulans (strain FGSC A4 / ATCC 38163 / CBS 112.46 / NRRL 194 / M139) (Aspergillus nidulans).